The chain runs to 159 residues: Ribosomal RNA large subunit methyltransferase H (159 aa).

Residues L76, G108, and F127 to L132 contribute to the S-adenosyl-L-methionine site.

Belongs to the RNA methyltransferase RlmH family. Homodimer.

Its subcellular location is the cytoplasm. The catalysed reaction is pseudouridine(1915) in 23S rRNA + S-adenosyl-L-methionine = N(3)-methylpseudouridine(1915) in 23S rRNA + S-adenosyl-L-homocysteine + H(+). Its function is as follows. Specifically methylates the pseudouridine at position 1915 (m3Psi1915) in 23S rRNA. The chain is Ribosomal RNA large subunit methyltransferase H from Bacillus mycoides (strain KBAB4) (Bacillus weihenstephanensis).